A 396-amino-acid chain; its full sequence is Cathepsin D (396 aa).

Residues 1–18 (MKMLLLCVFSALALTNDA) form the signal peptide. Residues 19–61 (LVRIPLKKFRSIRRQLTDSGKRAEELLADHHSLKYNLSFPASN) constitute a propeptide, activation peptide. The 318-residue stretch at 76–393 (YYGEIGLGTP…DRDANRVGFA (318 aa)) folds into the Peptidase A1 domain. The active site involves Asp-94. A disulfide bridge connects residues Cys-107 and Cys-114. N-linked (GlcNAc...) asparagine glycosylation is found at Asn-131 and Asn-249. Cys-272 and Cys-276 are disulfide-bonded. Residue Asp-281 is part of the active site. Residues Cys-315 and Cys-352 are joined by a disulfide bond.

Belongs to the peptidase A1 family. Monomer.

It localises to the lysosome. It catalyses the reaction Specificity similar to, but narrower than, that of pepsin A. Does not cleave the 4-Gln-|-His-5 bond in B chain of insulin.. With respect to regulation, inhibited by pepstatin. Functionally, acid protease active in intracellular protein breakdown. This chain is Cathepsin D (ctsd), found in Chionodraco hamatus (Antarctic teleost icefish).